Consider the following 245-residue polypeptide: DNA polymerase sliding clamp (245 aa).

The protein belongs to the PCNA family. As to quaternary structure, homotrimer. The subunits circularize to form a toroid; DNA passes through its center. Replication factor C (RFC) is required to load the toroid on the DNA.

In terms of biological role, sliding clamp subunit that acts as a moving platform for DNA processing. Responsible for tethering the catalytic subunit of DNA polymerase and other proteins to DNA during high-speed replication. In Archaeoglobus fulgidus (strain ATCC 49558 / DSM 4304 / JCM 9628 / NBRC 100126 / VC-16), this protein is DNA polymerase sliding clamp.